The primary structure comprises 461 residues: Putative aldehyde dehydrogenase FUS7 (461 aa).

220–225 (GSTTTG) lines the NAD(+) pocket. Catalysis depends on residues Glu-242 and Cys-276.

This sequence belongs to the aldehyde dehydrogenase family.

It carries out the reaction an aldehyde + NAD(+) + H2O = a carboxylate + NADH + 2 H(+). In terms of biological role, putative aldehyde dehydrogenase; part of the gene cluster that mediates the biosynthesis of the mycotoxin fusarin C. Within the cluster, FUS1, FUS2, FUS8 and FUS9 are sufficient for fusarin production. The other FUS cluster members are not essential for fusarin C biosynthesis. The chain is Putative aldehyde dehydrogenase FUS7 from Gibberella fujikuroi (strain CBS 195.34 / IMI 58289 / NRRL A-6831) (Bakanae and foot rot disease fungus).